A 244-amino-acid polypeptide reads, in one-letter code: Glucosamine-6-phosphate deaminase (244 aa).

Catalysis depends on Asp-67, which acts as the Proton acceptor; for enolization step. Asn-136 serves as the catalytic For ring-opening step. The active-site Proton acceptor; for ring-opening step is His-138. The active-site For ring-opening step is Glu-143.

This sequence belongs to the glucosamine/galactosamine-6-phosphate isomerase family. NagB subfamily.

It carries out the reaction alpha-D-glucosamine 6-phosphate + H2O = beta-D-fructose 6-phosphate + NH4(+). The protein operates within amino-sugar metabolism; N-acetylneuraminate degradation; D-fructose 6-phosphate from N-acetylneuraminate: step 5/5. Its function is as follows. Catalyzes the reversible isomerization-deamination of glucosamine 6-phosphate (GlcN6P) to form fructose 6-phosphate (Fru6P) and ammonium ion. The sequence is that of Glucosamine-6-phosphate deaminase from Clostridium botulinum (strain Okra / Type B1).